A 78-amino-acid polypeptide reads, in one-letter code: uncharacterized protein (78 aa).

Residues 1–45 form the signal peptide; that stretch reads MPVIAIIAIVIIVIILNKTGVSDSLTALTLATVAALLTGGGAAGA.

To E.coli YkfL.

This is an uncharacterized protein from Escherichia coli (strain K12).